The sequence spans 787 residues: ER degradation-enhancing alpha-mannosidase-like protein 1 (787 aa).

A signal peptide spans methionine 1 to serine 22. Residues asparagine 479, asparagine 609, asparagine 670, asparagine 693, and asparagine 756 are each glycosylated (N-linked (GlcNAc...) asparagine).

Belongs to the glycosyl hydrolase 47 family.

The protein resides in the endoplasmic reticulum lumen. Its function is as follows. Alpha-mannosidase-like protein involved in endoplasmic reticulum-associated degradation (ERAD). Delivers misfolded glycoproteins to proteasomes. It lacks mannosidase activity. The polypeptide is ER degradation-enhancing alpha-mannosidase-like protein 1 (mnl1) (Schizosaccharomyces pombe (strain 972 / ATCC 24843) (Fission yeast)).